Consider the following 103-residue polypeptide: Large ribosomal subunit protein uL24 (103 aa).

The protein belongs to the universal ribosomal protein uL24 family. Part of the 50S ribosomal subunit.

Its function is as follows. One of two assembly initiator proteins, it binds directly to the 5'-end of the 23S rRNA, where it nucleates assembly of the 50S subunit. One of the proteins that surrounds the polypeptide exit tunnel on the outside of the subunit. This Listeria innocua serovar 6a (strain ATCC BAA-680 / CLIP 11262) protein is Large ribosomal subunit protein uL24.